Here is a 2209-residue protein sequence, read N- to C-terminus: Genome polyprotein (2209 aa).

Residue G2 is the site of N-myristoyl glycine; by host attachment. The Cytoplasmic segment spans residues 2-1520; that stretch reads GAQVSSQKVG…NINRAMTILQ (1519 aa). The amphipathic alpha-helix stretch occupies residues 580-600; the sequence is GLGQMLESMIDNTVRETVGAA. Active-site for protease 2A activity residues include H901 and D919. Zn(2+) is bound by residues C936 and C938. Catalysis depends on C990, which acts as the For protease 2A activity. Residues C996 and H998 each contribute to the Zn(2+) site. Residues 1128–1200 are membrane-binding; the sequence is GDSWLKKFTE…HQSCPSQEHQ (73 aa). The tract at residues 1128–1266 is oligomerization; the sequence is GDSWLKKFTE…SPGTGKSVAT (139 aa). The interval 1149–1153 is RNA-binding; that stretch reads SNKIS. Residues 1232–1388 enclose the SF3 helicase domain; sequence EHTINNYIQF…NEYSRDGKLN (157 aa). 1256–1263 lines the ATP pocket; that stretch reads GSPGTGKS. 4 residues coordinate Zn(2+): C1396, C1399, C1408, and C1413. A C4-type zinc finger spans residues 1396 to 1413; that stretch reads CKNCHQPANFKRCCPLVC. The segment at 1440–1447 is RNA-binding; that stretch reads ERNRRSNI. The interval 1451-1456 is oligomerization; sequence MEALFQ. An intramembrane segment occupies 1521–1536; sequence AVTTFAAVAGVVYVMY. The Cytoplasmic segment spans residues 1537–2209; that stretch reads KLFAGHQGAY…TLYRRWLDSF (673 aa). Position 1546 is an O-(5'-phospho-RNA)-tyrosine (Y1546). A Peptidase C3 domain is found at 1566–1744; the sequence is GPGFDYAVAM…FAAALKRSYF (179 aa). Residues H1605, E1636, and C1712 each act as for protease 3C activity in the active site. The RdRp catalytic domain maps to 1975–2090; the sequence is EKLFAFDYTG…SYPHEVDASL (116 aa). Mg(2+) contacts are provided by D1981 and D2076.

Belongs to the picornaviruses polyprotein family. As to quaternary structure, interacts with capsid protein VP1 and capsid protein VP3 to form heterotrimeric protomers. Interacts with capsid protein VP0, and capsid protein VP3 to form heterotrimeric protomers. Interacts with human PVR. Five protomers subsequently associate to form pentamers which serve as building blocks for the capsid. Interacts with capsid protein VP2, capsid protein VP3 and capsid protein VP4 following cleavage of capsid protein VP0. In terms of assembly, interacts with capsid protein VP1 and capsid protein VP3 in the mature capsid. As to quaternary structure, interacts with capsid protein VP0 and capsid protein VP1 to form heterotrimeric protomers. Five protomers subsequently associate to form pentamers which serve as building blocks for the capsid. Interacts with capsid protein VP4 in the mature capsid. Interacts with protein 2C; this interaction may be important for virion morphogenesis. Interacts with capsid protein VP1 and capsid protein VP3. In terms of assembly, homodimer. As to quaternary structure, homohexamer; forms a hexameric ring structure with 6-fold symmetry characteristic of AAA+ ATPases. Interacts (via N-terminus) with host RTN3 (via reticulon domain); this interaction is important for viral replication. Interacts with capsid protein VP3; this interaction may be important for virion morphogenesis. Interacts with protein 3CD. In terms of assembly, homodimer. Interacts with host GBF1. Interacts (via GOLD domain) with host ACBD3 (via GOLD domain); this interaction allows the formation of a viral protein 3A/ACBD3 heterotetramer with a 2:2 stoichiometry, which will stimulate the recruitment of host PI4KB in order to synthesize PI4P at the viral RNA replication sites. As to quaternary structure, interacts with RNA-directed RNA polymerase. Interacts with protein 3AB and with RNA-directed RNA polymerase. In terms of assembly, interacts with Viral protein genome-linked and with protein 3CD. It depends on Mg(2+) as a cofactor. In terms of processing, specific enzymatic cleavages in vivo by the viral proteases yield processing intermediates and the mature proteins. Myristoylation is required for the formation of pentamers during virus assembly. Further assembly of 12 pentamers and a molecule of genomic RNA generates the provirion. Post-translationally, during virion maturation, immature virions are rendered infectious following cleavage of VP0 into VP4 and VP2. This maturation seems to be an autocatalytic event triggered by the presence of RNA in the capsid and it is followed by a conformational change infectious virion. In terms of processing, myristoylation is required during RNA encapsidation and formation of the mature virus particle. VPg is uridylylated by the polymerase into VPg-pUpU. This acts as a nucleotide-peptide primer for the genomic RNA replication.

It localises to the virion. Its subcellular location is the host cytoplasm. It is found in the host cytoplasmic vesicle membrane. The protein localises to the host nucleus. It carries out the reaction a ribonucleoside 5'-triphosphate + H2O = a ribonucleoside 5'-diphosphate + phosphate + H(+). The catalysed reaction is Selective cleavage of Tyr-|-Gly bond in the picornavirus polyprotein.. It catalyses the reaction RNA(n) + a ribonucleoside 5'-triphosphate = RNA(n+1) + diphosphate. The enzyme catalyses Selective cleavage of Gln-|-Gly bond in the poliovirus polyprotein. In other picornavirus reactions Glu may be substituted for Gln, and Ser or Thr for Gly.. Replication or transcription is subject to high level of random mutations by the nucleotide analog ribavirin. Its function is as follows. Forms an icosahedral capsid of pseudo T=3 symmetry with capsid proteins VP2 and VP3. The capsid is 300 Angstroms in diameter, composed of 60 copies of each capsid protein and enclosing the viral positive strand RNA genome. Capsid protein VP1 mainly forms the vertices of the capsid. Capsid protein VP1 interacts with host cell receptor PVR to provide virion attachment to target host cells. This attachment induces virion internalization predominantly through clathrin- and caveolin-independent endocytosis in Hela cells and through caveolin-mediated endocytosis in brain microvascular endothelial cells. Tyrosine kinases are probably involved in the entry process. Virus binding to PVR induces increased junctional permeability and rearrangement of junctional proteins. Modulation of endothelial tight junctions, as well as cytolytic infection of endothelial cells themselves, may result in loss of endothelial integrity which may help the virus to reach the CNS. After binding to its receptor, the capsid undergoes conformational changes. Capsid protein VP1 N-terminus (that contains an amphipathic alpha-helix) and capsid protein VP4 are externalized. Together, they shape a pore in the host membrane through which viral genome is translocated to host cell cytoplasm. Forms an icosahedral capsid of pseudo T=3 symmetry with capsid proteins VP2 and VP3. The capsid is 300 Angstroms in diameter, composed of 60 copies of each capsid protein and enclosing the viral positive strand RNA genome. In terms of biological role, lies on the inner surface of the capsid shell. After binding to the host receptor, the capsid undergoes conformational changes. Capsid protein VP4 is released, Capsid protein VP1 N-terminus is externalized, and together, they shape a pore in the host membrane through which the viral genome is translocated into the host cell cytoplasm. Functionally, component of immature procapsids, which is cleaved into capsid proteins VP4 and VP2 after maturation. Allows the capsid to remain inactive before the maturation step. Its function is as follows. Cysteine protease that cleaves viral polyprotein and specific host proteins. It is responsible for the autocatalytic cleavage between the P1 and P2 regions, which is the first cleavage occurring in the polyprotein. Also cleaves the host translation initiation factor EIF4G1, in order to shut down the capped cellular mRNA translation. Inhibits the host nucleus-cytoplasm protein and RNA trafficking by cleaving host members of the nuclear pores including NUP98, NUP62 and NUP153. Counteracts stress granule formation probably by antagonizing its assembly or promoting its dissassembly. Cleaves and inhibits host IFIH1/MDA5, thereby inhibiting the type-I IFN production and the establishment of the antiviral state. Cleaves and inhibits host MAVS, thereby inhibiting the type-I IFN production and the establishment of the antiviral state. Plays an essential role in the virus replication cycle by acting as a viroporin. Creates a pore in the host endoplasmic reticulum and as a consequence releases Ca2+ in the cytoplasm of infected cell. In turn, high levels of cytoplasmic calcium may trigger membrane trafficking and transport of viral ER-associated proteins to viroplasms, sites of viral genome replication. In terms of biological role, induces and associates with structural rearrangements of intracellular membranes. Displays RNA-binding, nucleotide binding and NTPase activities. May play a role in virion morphogenesis and viral RNA encapsidation by interacting with the capsid protein VP3. Functionally, localizes the viral replication complex to the surface of membranous vesicles. Together with protein 3CD binds the Cis-Active RNA Element (CRE) which is involved in RNA synthesis initiation. Acts as a cofactor to stimulate the activity of 3D polymerase, maybe through a nucleid acid chaperone activity. Its function is as follows. Localizes the viral replication complex to the surface of membranous vesicles. It inhibits host cell endoplasmic reticulum-to-Golgi apparatus transport and causes the disassembly of the Golgi complex, possibly through GBF1 interaction. This would result in depletion of MHC, trail receptors and IFN receptors at the host cell surface. Plays an essential role in viral RNA replication by recruiting ACBD3 and PI4KB at the viral replication sites, thereby allowing the formation of the rearranged membranous structures where viral replication takes place. Acts as a primer for viral RNA replication and remains covalently bound to viral genomic RNA. VPg is uridylylated prior to priming replication into VPg-pUpU. The oriI viral genomic sequence may act as a template for this. The VPg-pUpU is then used as primer on the genomic RNA poly(A) by the RNA-dependent RNA polymerase to replicate the viral genome. During genome replication, the VPg-RNA linkage is removed by the host TDP2, thereby accelerating replication. During the late stage of the replication cycle, host TDP2 is excluded from sites of viral RNA synthesis and encapsidation, allowing for the generation of progeny virions. In terms of biological role, involved in the viral replication complex and viral polypeptide maturation. It exhibits protease activity with a specificity and catalytic efficiency that is different from protease 3C. Protein 3CD lacks polymerase activity. Protein 3CD binds to the 5'UTR of the viral genome. Functionally, major viral protease that mediates proteolytic processing of the polyprotein. Cleaves host EIF5B, contributing to host translation shutoff. Also cleaves host PABPC1, contributing to host translation shutoff. Cleaves host RIGI and thus contributes to the inhibition of type I interferon production. Cleaves host NLRP1, triggers host N-glycine-mediated degradation of the autoinhibitory NLRP1 N-terminal fragment. Inhibits the integrated stress response (ISR) in the infected cell by cleaving host G3BP1. Stress granule formation is thus inhibited, which allows protein synthesis and viral replication. Its function is as follows. Replicates the viral genomic RNA on the surface of intracellular membranes. May form linear arrays of subunits that propagate along a strong head-to-tail interaction called interface-I. Covalently attaches UMP to a tyrosine of VPg, which is used to prime RNA synthesis. The positive stranded RNA genome is first replicated at virus induced membranous vesicles, creating a dsRNA genomic replication form. This dsRNA is then used as template to synthesize positive stranded RNA genomes. ss(+)RNA genomes are either translated, replicated or encapsidated. This is Genome polyprotein from Homo sapiens (Human).